Here is a 1053-residue protein sequence, read N- to C-terminus: Carbamoyl phosphate synthase large chain (1053 aa).

Residues 1-397 are carboxyphosphate synthetic domain; that stretch reads MPKNTSLKKV…GFKKALRSLD (397 aa). ATP is bound by residues R127, R167, G173, G174, E206, V208, E213, G239, V240, H241, Q282, and E294. An ATP-grasp 1 domain is found at 131 to 323; the sequence is KKLMLEIGEP…IARVAAKVAI (193 aa). Positions 282, 294, and 296 each coordinate Mg(2+). Positions 282, 294, and 296 each coordinate Mn(2+). The tract at residues 398-530 is oligomerization domain; it reads TDIYRHTDLN…YSTWEQECEL (133 aa). The carbamoyl phosphate synthetic domain stretch occupies residues 531–919; the sequence is TQSDRKKILI…YKASQAADNT (389 aa). Positions 661 to 852 constitute an ATP-grasp 2 domain; it reads SVLLDQNNIP…LAKIAAKLML (192 aa). Positions 697, 736, 738, 743, 768, 769, 770, 771, 811, and 823 each coordinate ATP. Mg(2+) contacts are provided by Q811, E823, and N825. 3 residues coordinate Mn(2+): Q811, E823, and N825. One can recognise an MGS-like domain in the interval 918-1053; the sequence is NTIPLKGNVF…TVEPLSHYHS (136 aa). Positions 920 to 1053 are allosteric domain; that stretch reads IPLKGNVFIS…TVEPLSHYHS (134 aa).

This sequence belongs to the CarB family. Composed of two chains; the small (or glutamine) chain promotes the hydrolysis of glutamine to ammonia, which is used by the large (or ammonia) chain to synthesize carbamoyl phosphate. Tetramer of heterodimers (alpha,beta)4. It depends on Mg(2+) as a cofactor. The cofactor is Mn(2+).

The catalysed reaction is hydrogencarbonate + L-glutamine + 2 ATP + H2O = carbamoyl phosphate + L-glutamate + 2 ADP + phosphate + 2 H(+). It catalyses the reaction hydrogencarbonate + NH4(+) + 2 ATP = carbamoyl phosphate + 2 ADP + phosphate + 2 H(+). It functions in the pathway amino-acid biosynthesis; L-arginine biosynthesis; carbamoyl phosphate from bicarbonate: step 1/1. Its pathway is pyrimidine metabolism; UMP biosynthesis via de novo pathway; (S)-dihydroorotate from bicarbonate: step 1/3. Large subunit of the glutamine-dependent carbamoyl phosphate synthetase (CPSase). CPSase catalyzes the formation of carbamoyl phosphate from the ammonia moiety of glutamine, carbonate, and phosphate donated by ATP, constituting the first step of 2 biosynthetic pathways, one leading to arginine and/or urea and the other to pyrimidine nucleotides. The large subunit (synthetase) binds the substrates ammonia (free or transferred from glutamine from the small subunit), hydrogencarbonate and ATP and carries out an ATP-coupled ligase reaction, activating hydrogencarbonate by forming carboxy phosphate which reacts with ammonia to form carbamoyl phosphate. This is Carbamoyl phosphate synthase large chain from Methanocorpusculum labreanum (strain ATCC 43576 / DSM 4855 / Z).